The following is a 184-amino-acid chain: Interferon alpha-3 (184 aa).

Residues 1–23 (MALPVSLLMALVVLSCHSSCSLG) form the signal peptide. Cystine bridges form between Cys-24–Cys-122 and Cys-52–Cys-162.

It belongs to the alpha/beta interferon family.

It localises to the secreted. Produced by macrophages, IFN-alpha have antiviral activities. Interferon stimulates the production of two enzymes: a protein kinase and an oligoadenylate synthetase. This Equus caballus (Horse) protein is Interferon alpha-3.